An 86-amino-acid polypeptide reads, in one-letter code: Large ribosomal subunit protein bL28 (86 aa).

This sequence belongs to the bacterial ribosomal protein bL28 family.

In Bacteroides fragilis (strain ATCC 25285 / DSM 2151 / CCUG 4856 / JCM 11019 / LMG 10263 / NCTC 9343 / Onslow / VPI 2553 / EN-2), this protein is Large ribosomal subunit protein bL28.